The sequence spans 359 residues: tRNA/tmRNA (uracil-C(5))-methyltransferase (359 aa).

S-adenosyl-L-methionine-binding residues include Gln183, Tyr211, Asn216, Glu232, and Asp292. The active-site Nucleophile is Cys317. Glu351 acts as the Proton acceptor in catalysis.

The protein belongs to the class I-like SAM-binding methyltransferase superfamily. RNA M5U methyltransferase family. TrmA subfamily.

It carries out the reaction uridine(54) in tRNA + S-adenosyl-L-methionine = 5-methyluridine(54) in tRNA + S-adenosyl-L-homocysteine + H(+). The enzyme catalyses uridine(341) in tmRNA + S-adenosyl-L-methionine = 5-methyluridine(341) in tmRNA + S-adenosyl-L-homocysteine + H(+). In terms of biological role, dual-specificity methyltransferase that catalyzes the formation of 5-methyluridine at position 54 (m5U54) in all tRNAs, and that of position 341 (m5U341) in tmRNA (transfer-mRNA). In Pseudomonas fluorescens (strain Pf0-1), this protein is tRNA/tmRNA (uracil-C(5))-methyltransferase.